A 161-amino-acid chain; its full sequence is Allophycocyanin beta chain (161 aa).

Residue Asn-71 is modified to N4-methylasparagine. Position 81 (Cys-81) interacts with (2R,3E)-phycocyanobilin.

It belongs to the phycobiliprotein family. As to quaternary structure, heterodimer of an alpha and a beta chain. In terms of processing, contains one covalently linked phycocyanobilin chromophore.

It is found in the plastid. The protein localises to the chloroplast thylakoid membrane. Light-harvesting photosynthetic bile pigment-protein from the phycobiliprotein complex. Allophycocyanin has a maximum absorption at approximately 650 nanometers. This Aglaothamnion neglectum (Red alga) protein is Allophycocyanin beta chain (apcB).